A 1118-amino-acid chain; its full sequence is DNA mismatch repair protein MSH1, mitochondrial (1118 aa).

Residue 768 to 775 coordinates ATP; sequence GPNGGGKS.

This sequence belongs to the DNA mismatch repair MutS family.

The protein resides in the mitochondrion. Its subcellular location is the plastid. The protein localises to the chloroplast. Its function is as follows. DNA mismatch repair protein specifically involved in maintenance of mitochondrial genome configuration by controlling specific rearranged portion. Functions by suppressing asymmetric recombination at some repeat pairs. The polypeptide is DNA mismatch repair protein MSH1, mitochondrial (MSH1) (Arabidopsis thaliana (Mouse-ear cress)).